Consider the following 703-residue polypeptide: Polyribonucleotide nucleotidyltransferase (703 aa).

Residues Asp-486 and Asp-492 each coordinate Mg(2+). One can recognise a KH domain in the interval 553–614 (PRITTIWIKP…AACDAAIQMI (62 aa)). Positions 624–692 (GKLYMGTVKK…KQGKIKLSRK (69 aa)) constitute an S1 motif domain.

The protein belongs to the polyribonucleotide nucleotidyltransferase family. Mg(2+) is required as a cofactor.

The protein resides in the cytoplasm. It carries out the reaction RNA(n+1) + phosphate = RNA(n) + a ribonucleoside 5'-diphosphate. In terms of biological role, involved in mRNA degradation. Catalyzes the phosphorolysis of single-stranded polyribonucleotides processively in the 3'- to 5'-direction. In Trichlorobacter lovleyi (strain ATCC BAA-1151 / DSM 17278 / SZ) (Geobacter lovleyi), this protein is Polyribonucleotide nucleotidyltransferase.